The sequence spans 275 residues: Nitrogenase iron protein 3 (275 aa).

9-16 (GKGGIGKS) is a binding site for ATP. A [4Fe-4S] cluster-binding site is contributed by cysteine 97. Arginine 100 bears the ADP-ribosylarginine; by dinitrogenase reductase ADP-ribosyltransferase mark. Cysteine 132 contacts [4Fe-4S] cluster.

The protein belongs to the NifH/BchL/ChlL family. In terms of assembly, homodimer. [4Fe-4S] cluster serves as cofactor. The reversible ADP-ribosylation of Arg-100 inactivates the nitrogenase reductase and regulates nitrogenase activity.

It carries out the reaction N2 + 8 reduced [2Fe-2S]-[ferredoxin] + 16 ATP + 16 H2O = H2 + 8 oxidized [2Fe-2S]-[ferredoxin] + 2 NH4(+) + 16 ADP + 16 phosphate + 6 H(+). In terms of biological role, the key enzymatic reactions in nitrogen fixation are catalyzed by the nitrogenase complex, which has 2 components: the iron protein (component 2) and a component 1 which is either a molybdenum-iron protein, a vanadium-iron, or an iron-iron protein. This chain is Nitrogenase iron protein 3 (anfH), found in Azotobacter vinelandii.